The chain runs to 760 residues: 5-methyltetrahydropteroyltriglutamate--homocysteine methyltransferase (760 aa).

5-methyltetrahydropteroyltri-L-glutamate-binding positions include 17-20 (RELK) and lysine 118. L-homocysteine contacts are provided by residues 434–436 (IGS) and glutamate 487. Residues 434–436 (IGS) and glutamate 487 each bind L-methionine. 5-methyltetrahydropteroyltri-L-glutamate-binding positions include 518–519 (RC) and tryptophan 564. Residue aspartate 602 participates in L-homocysteine binding. Aspartate 602 contacts L-methionine. Glutamate 608 contributes to the 5-methyltetrahydropteroyltri-L-glutamate binding site. Zn(2+) is bound by residues histidine 644, cysteine 646, and glutamate 668. Residue histidine 697 is the Proton donor of the active site. A Zn(2+)-binding site is contributed by cysteine 729.

This sequence belongs to the vitamin-B12 independent methionine synthase family. Requires Zn(2+) as cofactor.

It carries out the reaction 5-methyltetrahydropteroyltri-L-glutamate + L-homocysteine = tetrahydropteroyltri-L-glutamate + L-methionine. Its pathway is amino-acid biosynthesis; L-methionine biosynthesis via de novo pathway; L-methionine from L-homocysteine (MetE route): step 1/1. In terms of biological role, catalyzes the transfer of a methyl group from 5-methyltetrahydrofolate to homocysteine resulting in methionine formation. The protein is 5-methyltetrahydropteroyltriglutamate--homocysteine methyltransferase of Buchnera aphidicola subsp. Cinara cedri (strain Cc).